The sequence spans 359 residues: DNA polymerase IV (359 aa).

The UmuC domain occupies 4–184 (IVHVDMDAFY…LKVNRIPGVG (181 aa)). The Mg(2+) site is built by Asp-8 and Asp-102. Glu-103 is an active-site residue.

This sequence belongs to the DNA polymerase type-Y family. In terms of assembly, monomer. The cofactor is Mg(2+).

It is found in the cytoplasm. The catalysed reaction is DNA(n) + a 2'-deoxyribonucleoside 5'-triphosphate = DNA(n+1) + diphosphate. Poorly processive, error-prone DNA polymerase involved in untargeted mutagenesis. Copies undamaged DNA at stalled replication forks, which arise in vivo from mismatched or misaligned primer ends. These misaligned primers can be extended by PolIV. Exhibits no 3'-5' exonuclease (proofreading) activity. May be involved in translesional synthesis, in conjunction with the beta clamp from PolIII. The chain is DNA polymerase IV from Xanthomonas oryzae pv. oryzae (strain MAFF 311018).